Consider the following 176-residue polypeptide: Cytochrome b (176 aa).

3 helical membrane-spanning segments follow: residues 33-53 (FGSL…FLAM), 77-98 (WLLR…YLHI), and 113-133 (WNVG…GYVL). Heme b contacts are provided by histidine 83 and histidine 97.

This sequence belongs to the cytochrome b family. As to quaternary structure, the cytochrome bc1 complex contains 11 subunits: 3 respiratory subunits (MT-CYB, CYC1 and UQCRFS1), 2 core proteins (UQCRC1 and UQCRC2) and 6 low-molecular weight proteins (UQCRH/QCR6, UQCRB/QCR7, UQCRQ/QCR8, UQCR10/QCR9, UQCR11/QCR10 and a cleavage product of UQCRFS1). This cytochrome bc1 complex then forms a dimer. The cofactor is heme b.

It is found in the mitochondrion inner membrane. In terms of biological role, component of the ubiquinol-cytochrome c reductase complex (complex III or cytochrome b-c1 complex) that is part of the mitochondrial respiratory chain. The b-c1 complex mediates electron transfer from ubiquinol to cytochrome c. Contributes to the generation of a proton gradient across the mitochondrial membrane that is then used for ATP synthesis. The protein is Cytochrome b (MT-CYB) of Promops centralis (Big crested mastiff bat).